The following is a 187-amino-acid chain: Adenine phosphoribosyltransferase (187 aa).

Belongs to the purine/pyrimidine phosphoribosyltransferase family. Homodimer.

It is found in the cytoplasm. It carries out the reaction AMP + diphosphate = 5-phospho-alpha-D-ribose 1-diphosphate + adenine. It functions in the pathway purine metabolism; AMP biosynthesis via salvage pathway; AMP from adenine: step 1/1. Its function is as follows. Catalyzes a salvage reaction resulting in the formation of AMP, that is energically less costly than de novo synthesis. This chain is Adenine phosphoribosyltransferase, found in Paracoccus denitrificans (strain Pd 1222).